A 241-amino-acid polypeptide reads, in one-letter code: Venom nerve growth factor 2 (241 aa).

A signal peptide spans 1–18; the sequence is MSMLCYTLITAFLIGIWA. Positions 19–125 are excised as a propeptide; it reads APKSEDNVPL…SLNRNIRAKR (107 aa). A disordered region spans residues 47–67; sequence GLKTSRNTDQRHPAPQKAEDQ. Cystine bridges form between Cys139–Cys203, Cys181–Cys231, and Cys191–Cys233.

It belongs to the NGF-beta family. Homodimer; non-covalently linked. Expressed by the venom gland.

It is found in the secreted. In terms of biological role, nerve growth factor is important for the development and maintenance of the sympathetic and sensory nervous systems. It stimulates division and differentiation of sympathetic and embryonic sensory neurons as well as basal forebrain cholinergic neurons in the brain. Its relevance in the snake venom is not clear. However, it has been shown to inhibit metalloproteinase-dependent proteolysis of platelet glycoprotein Ib alpha, suggesting a metalloproteinase inhibition to prevent metalloprotease autodigestion and/or protection against prey proteases. Binds a lipid between the two protein chains in the homodimer. The lipid-bound form promotes histamine relase from mouse mast cells, contrary to the lipid-free form. The polypeptide is Venom nerve growth factor 2 (Naja sputatrix (Malayan spitting cobra)).